A 464-amino-acid polypeptide reads, in one-letter code: Gasdermin-A3 (464 aa).

A triggers pyroptosis region spans residues 1 to 261 (MPVFEDVTRA…EEPEEEKLIG (261 aa)). Position 9-13 (9-13 (RALVR)) interacts with a cardiolipin. Beta stranded transmembrane passes span 78 to 95 (NFSF…LVEV), 99 to 120 (VKVK…TLSV), 164 to 180 (VTVE…SLPS), and 184 to 198 (LGLQ…AVTI). Positions 255–327 (EEEKLIGEMH…DKGQKVTLEA (73 aa)) form a coiled coil.

Belongs to the gasdermin family. As to quaternary structure, homooligomer; homooligomeric ring-shaped pore complex containing 18-36 subunits when inserted in the membrane. In terms of processing, cleavage relieves autoinhibition by releasing the N-terminal moiety (Gasdermin-A3, N-terminal) that initiates pyroptosis. In contrast to Gsdma, not cleaved by bacterial effector protein SpeB. Post-translationally, palmitoylated. As to expression, highest levels in skin with weak expression in placenta and testis. Not detected in the gastrointestinal tract. In skin, expressed in postnatal hair follicles and epidermis as well as sebaceous gland basal cells.

Its subcellular location is the cytoplasm. It localises to the cytosol. The protein localises to the cell membrane. The protein resides in the mitochondrion membrane. Its activity is regulated as follows. The full-length protein before cleavage is inactive: intramolecular interactions between N- and C-terminal domains mediate autoinhibition in the absence of activation signal. The intrinsic pyroptosis-inducing activity is carried by the released N-terminal moiety (Gasdermin-A3, N-terminal). Its function is as follows. Precursor of a pore-forming protein involved in the transition from catagen to telogen at the end of hair follicle morphogenesis. This form constitutes the precursor of the pore: upon cleavage, the released N-terminal moiety (Gasdermin-A3, N-terminal) binds to membranes and forms pores, triggering pyroptosis. This form acts as a sensor of infection: activation is triggered by cleavage by some bacterial effector protein, which releases the N-terminal moiety (Gasdermin-A3, N-terminal). In terms of biological role, pore-forming protein that causes membrane permeabilization and pyroptosis. Released upon cleavage by some bacterial effector protein, and binds to membrane inner leaflet lipids. Homooligomerizes within the membrane and forms pores of 10-15 nanometers (nm) of inner diameter, allowing the release of mature interleukin-1 (IL1B and IL18) and triggering pyroptosis. Binds to membrane inner leaflet lipids, including bisphosphorylated phosphatidylinositols, such as phosphatidylinositol (4,5)-bisphosphate, as well as phosphatidylinositol (3,4,5)-bisphosphate, and more weakly to monophosphorylated phosphatidylinositols. Also binds to bacterial and mitochondrial lipids, including cardiolipin, and exhibits bactericidal activity. Plays a role in the transition from catagen to telogen at the end of hair follicle morphogenesis, possibly by regulating hair follicle stem cell niche maintenance. Also required for mammary gland development. The chain is Gasdermin-A3 from Mus musculus (Mouse).